We begin with the raw amino-acid sequence, 571 residues long: Urease subunit alpha (571 aa).

A Urease domain is found at 134–571 (GAIDTHIHFI…LPMAQRYFLF (438 aa)). His139, His141, and Lys222 together coordinate Ni(2+). Lys222 carries the N6-carboxylysine modification. His224 contacts substrate. His251 and His277 together coordinate Ni(2+). His325 functions as the Proton donor in the catalytic mechanism. Asp365 serves as a coordination point for Ni(2+).

The protein belongs to the metallo-dependent hydrolases superfamily. Urease alpha subunit family. Heterotrimer of UreA (gamma), UreB (beta) and UreC (alpha) subunits. Three heterotrimers associate to form the active enzyme. Requires Ni cation as cofactor. Post-translationally, carboxylation allows a single lysine to coordinate two nickel ions.

It localises to the cytoplasm. It carries out the reaction urea + 2 H2O + H(+) = hydrogencarbonate + 2 NH4(+). The protein operates within nitrogen metabolism; urea degradation; CO(2) and NH(3) from urea (urease route): step 1/1. This Bordetella pertussis (strain Tohama I / ATCC BAA-589 / NCTC 13251) protein is Urease subunit alpha.